We begin with the raw amino-acid sequence, 580 residues long: Frizzled and smoothened-like protein K (580 aa).

The first 18 residues, 1 to 18 (MRVLFILFLFYFYTYTEA), serve as a signal peptide directing secretion. Residues 19–236 (QQYYPIDPTG…QWDNIFDTSD (218 aa)) are Extracellular-facing. One can recognise an FZ domain in the interval 25–154 (DPTGKCEQYI…SSDYNLTTYG (130 aa)). N-linked (GlcNAc...) asparagine glycosylation is found at Asn-52, Asn-97, Asn-149, Asn-170, and Asn-186. A helical transmembrane segment spans residues 237–257 (AISLVSLLCSVYLFITYMVIN). Over 258–264 (PKRNKYD) the chain is Cytoplasmic. A helical membrane pass occupies residues 265-285 (YFFSFFVLSIILMSIAGTIGF). Over 286–308 (SVGGTRKLLCPEINRRGVYTDPA) the chain is Extracellular. A helical transmembrane segment spans residues 309 to 329 (VAAAGWIFQFAIINAILWFSI). Residues 330–349 (NSFELWFQIKFIKRKLHLIK) lie on the Cytoplasmic side of the membrane. Residues 350–370 (FYILAVLVISIALSVPLSAIG) form a helical membrane-spanning segment. Over 371 to 391 (EFNAGLGNFVVWIESGKYQNW) the chain is Extracellular. Residues 392-412 (FFWGPLGIVLTVGTTFIGLVI) traverse the membrane as a helical segment. Over 413 to 434 (WEIYKIVSSTNKSDFFKLQLKP) the chain is Cytoplasmic. The helical transmembrane segment at 435–455 (LMNMLLIYLTFVYLFGYNFYI) threads the bilayer. At 456 to 490 (HNSLNGFYGSSEEFKNCIISTDGKDCRIQGPPYSS) the chain is on the extracellular side. The chain crosses the membrane as a helical span at residues 491–511 (ILMFVFCLRIYGVYCIALYGF). Residues 512 to 580 (SPKTRSIWSN…SMEPDEIILR (69 aa)) lie on the Cytoplasmic side of the membrane. The Lys-Thr-X-X-X-Trp motif, mediates interaction with the PDZ domain of Dvl family members motif lies at 514–519 (KTRSIW). The segment at 542-580 (TTKGGTSSTDIKMSTNNNSNMDSGGGKSSSMEPDEIILR) is disordered. Residues 551–563 (DIKMSTNNNSNMD) are compositionally biased toward polar residues.

Belongs to the G-protein coupled receptor Fz/Smo family.

Its subcellular location is the membrane. This Dictyostelium discoideum (Social amoeba) protein is Frizzled and smoothened-like protein K (fslK).